A 183-amino-acid chain; its full sequence is Adenylate kinase (183 aa).

Residue 12 to 17 participates in ATP binding; it reads GAGKGT. An NMP region spans residues 32–61; sequence STGDLLRAEVSAGSALGQEAESVMNRGELV. Residues threonine 33, arginine 38, 59–61, 86–89, and glutamine 93 each bind AMP; these read ELV and GFPR. The tract at residues 127 to 133 is LID; that stretch reads SRGRDDD. Arginine 128 is a binding site for ATP. The AMP site is built by arginine 130 and arginine 141. Position 169 (glycine 169) interacts with ATP.

The protein belongs to the adenylate kinase family. In terms of assembly, monomer.

It is found in the cytoplasm. It carries out the reaction AMP + ATP = 2 ADP. It functions in the pathway purine metabolism; AMP biosynthesis via salvage pathway; AMP from ADP: step 1/1. Its function is as follows. Catalyzes the reversible transfer of the terminal phosphate group between ATP and AMP. Plays an important role in cellular energy homeostasis and in adenine nucleotide metabolism. The chain is Adenylate kinase from Synechococcus sp. (strain CC9311).